Reading from the N-terminus, the 451-residue chain is MSIQSGEILETVKMVADQNFDVRTITIGIDLHDCISTDIDVLNQNIYNKITTVGKDLVATAKYLSAKYGVPIVNQRISVTPIAQIAAASKADSYVSVAQTLDKAAKAIGVSFIGGFSALVQKGMSPSDEVLIRSIPEAMKTTDIVCSSINVGSTRAGINMDAVKLAGETIKRTAEITPEGFGCAKIVVFCNAVEDNPFMAGAFHGSGEADAVINVGVSGPGVVKAALENSDATTLTEVAEVVKKTAFKITRVGELIGREASKMLNIPFGILDLSLAPTPAVGDSVARILEEMGLSVCGTHGTTAALALLNDAVKKGGMMASGSVGGLSGAFIPVSEDEGMIAAAEAGVLTLDKLEAMTAVCSVGLDMIAVPGDTPAHTISGIIADEAAIGMINSKTTAVRIIPVTGKTVGDSVEFGGLLGYAPVMPVKEGSCEVFVNRGGRIPAPVQSMKN.

This sequence belongs to the UPF0210 family. In terms of assembly, homodimer.

This is UPF0210 protein NMCC_1554 from Neisseria meningitidis serogroup C (strain 053442).